Reading from the N-terminus, the 117-residue chain is Galanin peptides (117 aa).

A signal peptide spans methionine 1 to serine 19. Residues glutamate 20–glutamate 30 constitute a propeptide that is removed on maturation. Threonine amide is present on threonine 61.

Belongs to the galanin family.

Its subcellular location is the secreted. Its function is as follows. Endocrine hormone of the central and peripheral nervous systems that binds and activates the G protein-coupled receptors GALR1, GALR2, and GALR3. This small neuropeptide may regulate diverse physiologic functions including contraction of smooth muscle of the gastrointestinal and genitourinary tract, growth hormone and insulin release and adrenal secretion. This chain is Galanin peptides (GAL), found in Coturnix japonica (Japanese quail).